We begin with the raw amino-acid sequence, 554 residues long: Glutamine--tRNA ligase (554 aa).

The short motif at proline 34 to histidine 44 is the 'HIGH' region element. ATP is bound by residues glutamate 35–asparagine 37 and histidine 41–serine 47. L-glutamine is bound by residues aspartate 67 and tyrosine 212. ATP contacts are provided by residues threonine 231, arginine 261–leucine 262, and methionine 269–lysine 271. Residues valine 268–arginine 272 carry the 'KMSKS' region motif. Positions threonine 317–glutamate 324 are interaction with tRNA.

Belongs to the class-I aminoacyl-tRNA synthetase family. In terms of assembly, monomer.

The protein localises to the cytoplasm. The catalysed reaction is tRNA(Gln) + L-glutamine + ATP = L-glutaminyl-tRNA(Gln) + AMP + diphosphate. The chain is Glutamine--tRNA ligase from Escherichia coli O157:H7.